Consider the following 212-residue polypeptide: Nucleoredoxin-like protein 1 (212 aa).

Residues 1-164 (MASLFSGRIL…AAEVLDRNFQ (164 aa)) form the Thioredoxin domain. Residues 191–212 (AARGGRDPGGGGGEEGGAGGLF) are disordered. A compositionally biased stretch (gly residues) spans 197–212 (DPGGGGGEEGGAGGLF).

This sequence belongs to the nucleoredoxin family. In terms of assembly, interacts with isoform 1 of BSG.

Its subcellular location is the cell projection. The protein localises to the cilium. The protein resides in the photoreceptor outer segment. Its function is as follows. Plays an important role in retinal cone photoreceptor survival. In association with glucose transporter SLC16A1/GLUT1 and BSG, promotes retinal cone survival by enhancing aerobic glycolysis and accelerating the entry of glucose into photoreceptors. May play a role in cone cell viability, slowing down cone degeneration, does not seem to play a role in degenerating rods. In Homo sapiens (Human), this protein is Nucleoredoxin-like protein 1 (NXNL1).